Consider the following 370-residue polypeptide: UDP-N-acetylglucosamine--N-acetylmuramyl-(pentapeptide) pyrophosphoryl-undecaprenol N-acetylglucosamine transferase (370 aa).

Residues 10–12 (TGG), Asn-124, Arg-166, Ser-198, Ile-252, and Gln-297 each bind UDP-N-acetyl-alpha-D-glucosamine.

This sequence belongs to the glycosyltransferase 28 family. MurG subfamily.

Its subcellular location is the cell membrane. The catalysed reaction is di-trans,octa-cis-undecaprenyl diphospho-N-acetyl-alpha-D-muramoyl-L-alanyl-D-glutamyl-meso-2,6-diaminopimeloyl-D-alanyl-D-alanine + UDP-N-acetyl-alpha-D-glucosamine = di-trans,octa-cis-undecaprenyl diphospho-[N-acetyl-alpha-D-glucosaminyl-(1-&gt;4)]-N-acetyl-alpha-D-muramoyl-L-alanyl-D-glutamyl-meso-2,6-diaminopimeloyl-D-alanyl-D-alanine + UDP + H(+). It participates in cell wall biogenesis; peptidoglycan biosynthesis. Its function is as follows. Cell wall formation. Catalyzes the transfer of a GlcNAc subunit on undecaprenyl-pyrophosphoryl-MurNAc-pentapeptide (lipid intermediate I) to form undecaprenyl-pyrophosphoryl-MurNAc-(pentapeptide)GlcNAc (lipid intermediate II). The polypeptide is UDP-N-acetylglucosamine--N-acetylmuramyl-(pentapeptide) pyrophosphoryl-undecaprenol N-acetylglucosamine transferase (Finegoldia magna (strain ATCC 29328 / DSM 20472 / WAL 2508) (Peptostreptococcus magnus)).